The chain runs to 85 residues: SCOCO-like protein 1 (85 aa).

The segment covering 1-20 has biased composition (polar residues); that stretch reads MSAENISTGSPTGKQPSSEV. The tract at residues 1 to 34 is disordered; the sequence is MSAENISTGSPTGKQPSSEVNLGEREAGTKNERM. S2 carries the post-translational modification N-acetylserine. S10 carries the phosphoserine modification. Basic and acidic residues predominate over residues 22–34; the sequence is LGEREAGTKNERM.

The protein belongs to the SLO1 family. In terms of assembly, interacts with ARL3.

This Saccharomyces cerevisiae (strain ATCC 204508 / S288c) (Baker's yeast) protein is SCOCO-like protein 1 (SLO1).